The following is a 254-amino-acid chain: Thiazole synthase (254 aa).

Lys95 functions as the Schiff-base intermediate with DXP in the catalytic mechanism. 1-deoxy-D-xylulose 5-phosphate contacts are provided by residues Gly156, 182–183 (AG), and 204–205 (NT).

Belongs to the ThiG family. Homotetramer. Forms heterodimers with either ThiH or ThiS.

The protein resides in the cytoplasm. The catalysed reaction is [ThiS sulfur-carrier protein]-C-terminal-Gly-aminoethanethioate + 2-iminoacetate + 1-deoxy-D-xylulose 5-phosphate = [ThiS sulfur-carrier protein]-C-terminal Gly-Gly + 2-[(2R,5Z)-2-carboxy-4-methylthiazol-5(2H)-ylidene]ethyl phosphate + 2 H2O + H(+). The protein operates within cofactor biosynthesis; thiamine diphosphate biosynthesis. Catalyzes the rearrangement of 1-deoxy-D-xylulose 5-phosphate (DXP) to produce the thiazole phosphate moiety of thiamine. Sulfur is provided by the thiocarboxylate moiety of the carrier protein ThiS. In vitro, sulfur can be provided by H(2)S. The polypeptide is Thiazole synthase (Vibrio atlanticus (strain LGP32) (Vibrio splendidus (strain Mel32))).